A 154-amino-acid chain; its full sequence is UPF0178 protein Sala_2376 (154 aa).

This sequence belongs to the UPF0178 family.

The sequence is that of UPF0178 protein Sala_2376 from Sphingopyxis alaskensis (strain DSM 13593 / LMG 18877 / RB2256) (Sphingomonas alaskensis).